A 445-amino-acid polypeptide reads, in one-letter code: UPF0210 protein SEQ_0468 (445 aa).

It belongs to the UPF0210 family. Homodimer.

The chain is UPF0210 protein SEQ_0468 from Streptococcus equi subsp. equi (strain 4047).